A 484-amino-acid chain; its full sequence is Cytochrome P450 monooxygenase poxD (484 aa).

A helical transmembrane segment spans residues 2–24 (VSPVVLATTAMIVVFLLAQRYLS). Residue Cys-429 participates in heme binding.

It belongs to the cytochrome P450 family. Heme serves as cofactor.

The protein resides in the membrane. It participates in secondary metabolite biosynthesis. Functionally, cytochrome P450 monooxygenase; part of the gene cluster that mediates the biosynthesis of oxaleimides, cytotoxic compounds containing an unusual disubstituted succinimide moiety. The first step of the pathway is provided by the HR-PKS poxF that serves in a new mode of collaborative biosynthesis with the PKS-NRPS poxE, by providing the olefin containing amino acid substrate via the synthesis of an ACP-bound dec-4-enoate. The cytochrome P450 monooxygenase poxM-catalyzed oxidation at the alpha-position creates the enzyme-bound 2-hydroxydec-4-enoyl-ACP thioester, which may be prone to spontaneous hydrolysis to yield 2-hydroxydec-4-enoic acid due to increased electrophilicity of the carbonyl. 2-hydroxydec-4-enoic acid can then be further oxidized by poxM to yield the alpha-ketoacid 2-oxodec-4-enoicacid, which is reductively aminated by the aminotransferase poxL to yield (S,E)-2-aminodec-4-enoic acid. The Hybrid PKS-NRPS synthetase poxE then performs condensation between the octaketide product of its PKS modules and the amino group of (S,E)-2-aminodec-4-enoic acid which is activated and incorporated by the adenylation domain. The resulting aminoacyl product can be cyclized by the Diels-Alderase PoxQ and reductively released by the reductive (R) domain of poxE to yield an aldehyde intermediate. The released aldehyde is then substrate for a Knoevenagel condensation by the hydrolyase poxO followed by an oxidation at the 5-position of the pyrrolidone ring. The presence of the olefin from the amino acid building block allows for migration of the substituted allyl group to occur. This allylic transposition reaction takes place in a conjugate addition, semipinacol-like fashion to yield a succinimide intermediate. Iterative two-electron oxidations of the C7 methyl of the succinimide intermediate to the carboxylic acid can be catalyzed by one of two remaining cytochrome P450 monooxygenasess poxC or poxD to yield oxaleimide A. Subsequent oxidation yields the maleimide scaffold oxaleimide I. Both oxaleimide A and oxaleimide I can undergo oxidative modifications in the decalin ring to yield the series of products oxaleimides B to H. This is Cytochrome P450 monooxygenase poxD from Penicillium oxalicum.